The sequence spans 583 residues: CTP synthase (583 aa).

An amidoligase domain region spans residues 1–278 (MRKHPQTATK…DAYVVRRLNL (278 aa)). CTP is bound at residue Ser-20. Ser-20 is a UTP binding site. ATP contacts are provided by residues 21–26 (SLGKGL) and Asp-78. Positions 78 and 152 each coordinate Mg(2+). CTP-binding positions include 159–161 (DIE), 199–204 (KTKPTQ), and Lys-235. UTP-binding positions include 199 to 204 (KTKPTQ) and Lys-235. The Glutamine amidotransferase type-1 domain maps to 303 to 551 (RIALVGKYVE…VGAAMDYKAG (249 aa)). An L-glutamine-binding site is contributed by Gly-366. The Nucleophile; for glutamine hydrolysis role is filled by Cys-393. L-glutamine is bound by residues 394 to 397 (LGLQ), Glu-416, and Arg-477. Active-site residues include His-524 and Glu-526. Positions 560–583 (EQSSNGIQHRDSAARPIPEPAARG) are disordered.

The protein belongs to the CTP synthase family. As to quaternary structure, homotetramer.

It catalyses the reaction UTP + L-glutamine + ATP + H2O = CTP + L-glutamate + ADP + phosphate + 2 H(+). It carries out the reaction L-glutamine + H2O = L-glutamate + NH4(+). The enzyme catalyses UTP + NH4(+) + ATP = CTP + ADP + phosphate + 2 H(+). It participates in pyrimidine metabolism; CTP biosynthesis via de novo pathway; CTP from UDP: step 2/2. Its activity is regulated as follows. Allosterically activated by GTP, when glutamine is the substrate; GTP has no effect on the reaction when ammonia is the substrate. The allosteric effector GTP functions by stabilizing the protein conformation that binds the tetrahedral intermediate(s) formed during glutamine hydrolysis. Inhibited by the product CTP, via allosteric rather than competitive inhibition. Functionally, catalyzes the ATP-dependent amination of UTP to CTP with either L-glutamine or ammonia as the source of nitrogen. Regulates intracellular CTP levels through interactions with the four ribonucleotide triphosphates. The protein is CTP synthase of Mycolicibacterium paratuberculosis (strain ATCC BAA-968 / K-10) (Mycobacterium paratuberculosis).